A 131-amino-acid chain; its full sequence is Small ribosomal subunit protein eS24 (131 aa).

An N-acetylmethionine modification is found at Met1. Thr9 is modified (phosphothreonine). A Glycyl lysine isopeptide (Lys-Gly) (interchain with G-Cter in SUMO2) cross-link involves residue Lys37. Over residues 90-100 the composition is skewed to basic and acidic residues; that stretch reads RLARHGLYEKK. The tract at residues 90–131 is disordered; that stretch reads RLARHGLYEKKKTSRKQRKERKNRMKKVRGTAKANVGAGKKK. The span at 101–119 shows a compositional bias: basic residues; that stretch reads KTSRKQRKERKNRMKKVRG.

The protein belongs to the eukaryotic ribosomal protein eS24 family. In terms of assembly, component of the small ribosomal subunit. Part of the small subunit (SSU) processome, composed of more than 70 proteins and the RNA chaperone small nucleolar RNA (snoRNA) U3.

The protein localises to the cytoplasm. The protein resides in the nucleus. Its subcellular location is the nucleolus. Component of the small ribosomal subunit. The ribosome is a large ribonucleoprotein complex responsible for the synthesis of proteins in the cell. Required for processing of pre-rRNA and maturation of 40S ribosomal subunits. Part of the small subunit (SSU) processome, first precursor of the small eukaryotic ribosomal subunit. During the assembly of the SSU processome in the nucleolus, many ribosome biogenesis factors, an RNA chaperone and ribosomal proteins associate with the nascent pre-rRNA and work in concert to generate RNA folding, modifications, rearrangements and cleavage as well as targeted degradation of pre-ribosomal RNA by the RNA exosome. This is Small ribosomal subunit protein eS24 (RPS24) from Macaca fascicularis (Crab-eating macaque).